A 117-amino-acid polypeptide reads, in one-letter code: Ribonuclease P protein component (117 aa).

Belongs to the RnpA family. In terms of assembly, consists of a catalytic RNA component (M1 or rnpB) and a protein subunit.

The enzyme catalyses Endonucleolytic cleavage of RNA, removing 5'-extranucleotides from tRNA precursor.. Its function is as follows. RNaseP catalyzes the removal of the 5'-leader sequence from pre-tRNA to produce the mature 5'-terminus. It can also cleave other RNA substrates such as 4.5S RNA. The protein component plays an auxiliary but essential role in vivo by binding to the 5'-leader sequence and broadening the substrate specificity of the ribozyme. The protein is Ribonuclease P protein component of Desulforapulum autotrophicum (strain ATCC 43914 / DSM 3382 / VKM B-1955 / HRM2) (Desulfobacterium autotrophicum).